The primary structure comprises 404 residues: UPF0261 protein CTC_01794 (404 aa).

The protein belongs to the UPF0261 family.

The protein is UPF0261 protein CTC_01794 of Clostridium tetani (strain Massachusetts / E88).